Reading from the N-terminus, the 111-residue chain is UPF0342 protein SAG1376 (111 aa).

The span at 52 to 63 (QEMMQSGQMPSQ) shows a compositional bias: polar residues. The segment at 52-71 (QEMMQSGQMPSQEEQDEMSK) is disordered.

It belongs to the UPF0342 family.

The sequence is that of UPF0342 protein SAG1376 from Streptococcus agalactiae serotype V (strain ATCC BAA-611 / 2603 V/R).